Consider the following 363-residue polypeptide: UDP-3-O-acylglucosamine N-acyltransferase (363 aa).

Residue His252 is the Proton acceptor of the active site.

The protein belongs to the transferase hexapeptide repeat family. LpxD subfamily. As to quaternary structure, homotrimer.

The catalysed reaction is a UDP-3-O-[(3R)-3-hydroxyacyl]-alpha-D-glucosamine + a (3R)-hydroxyacyl-[ACP] = a UDP-2-N,3-O-bis[(3R)-3-hydroxyacyl]-alpha-D-glucosamine + holo-[ACP] + H(+). Its pathway is bacterial outer membrane biogenesis; LPS lipid A biosynthesis. In terms of biological role, catalyzes the N-acylation of UDP-3-O-acylglucosamine using 3-hydroxyacyl-ACP as the acyl donor. Is involved in the biosynthesis of lipid A, a phosphorylated glycolipid that anchors the lipopolysaccharide to the outer membrane of the cell. This chain is UDP-3-O-acylglucosamine N-acyltransferase, found in Cupriavidus necator (strain ATCC 17699 / DSM 428 / KCTC 22496 / NCIMB 10442 / H16 / Stanier 337) (Ralstonia eutropha).